We begin with the raw amino-acid sequence, 138 residues long: Large ribosomal subunit protein bL19 (138 aa).

This sequence belongs to the bacterial ribosomal protein bL19 family.

Its function is as follows. This protein is located at the 30S-50S ribosomal subunit interface and may play a role in the structure and function of the aminoacyl-tRNA binding site. The polypeptide is Large ribosomal subunit protein bL19 (rplS) (Rickettsia prowazekii (strain Madrid E)).